We begin with the raw amino-acid sequence, 445 residues long: 6-phosphogluconate dehydrogenase, decarboxylating (445 aa).

NADP(+) is bound by residues 1–4, 22–24, 63–65, and N91; these read AVMG, NRS, and VQA. Substrate-binding positions include N91 and 117-119; that span reads SGG. K172 serves as the catalytic Proton acceptor. 175 to 176 contacts substrate; the sequence is HN. E179 serves as the catalytic Proton donor. Substrate contacts are provided by Y180, K249, R276, R434, and H440.

It belongs to the 6-phosphogluconate dehydrogenase family. In terms of assembly, homodimer.

It catalyses the reaction 6-phospho-D-gluconate + NADP(+) = D-ribulose 5-phosphate + CO2 + NADPH. It functions in the pathway carbohydrate degradation; pentose phosphate pathway; D-ribulose 5-phosphate from D-glucose 6-phosphate (oxidative stage): step 3/3. Functionally, catalyzes the oxidative decarboxylation of 6-phosphogluconate to ribulose 5-phosphate and CO(2), with concomitant reduction of NADP to NADPH. This Pseudescherichia vulneris (Escherichia vulneris) protein is 6-phosphogluconate dehydrogenase, decarboxylating (gnd).